The sequence spans 916 residues: Translation initiation factor IF-2 (916 aa).

Residues 58–317 (LEAEGHLPGA…GVTVPRGDGG (260 aa)) are disordered. Low complexity predominate over residues 120–142 (EKVAASEAADAKPAAGAPADTAK). The segment covering 195–206 (SNIPRPAPPRPG) has biased composition (pro residues). Composition is skewed to gly residues over residues 214-227 (RPGGGQRQGGGGRP) and 235-282 (SAGG…GRGG). Residues 283-294 (GKSKARKSKRAK) show a composition bias toward basic residues. In terms of domain architecture, tr-type G spans 409–583 (IRPPVVTVMG…LTADAGLDLR (175 aa)). Residues 418–425 (GHVDHGKT) form a G1 region. 418 to 425 (GHVDHGKT) contacts GTP. A G2 region spans residues 443-447 (GITQH). The tract at residues 468 to 471 (DTPG) is G3. GTP-binding positions include 468–472 (DTPGH) and 522–525 (NKVD). The interval 522 to 525 (NKVD) is G4. The tract at residues 558-560 (SAR) is G5.

Belongs to the TRAFAC class translation factor GTPase superfamily. Classic translation factor GTPase family. IF-2 subfamily.

The protein localises to the cytoplasm. Functionally, one of the essential components for the initiation of protein synthesis. Protects formylmethionyl-tRNA from spontaneous hydrolysis and promotes its binding to the 30S ribosomal subunits. Also involved in the hydrolysis of GTP during the formation of the 70S ribosomal complex. This is Translation initiation factor IF-2 from Leifsonia xyli subsp. xyli (strain CTCB07).